Reading from the N-terminus, the 233-residue chain is Purine nucleoside phosphorylase DeoD-type (233 aa).

His-4 is a binding site for a purine D-ribonucleoside. Residues Gly-20, Arg-24, Arg-43, and Arg-87–Thr-90 each bind phosphate. A purine D-ribonucleoside-binding positions include Glu-178–Glu-180 and Ser-202–Asp-203. Asp-203 acts as the Proton donor in catalysis.

It belongs to the PNP/UDP phosphorylase family. Homohexamer; trimer of homodimers.

It carries out the reaction a purine D-ribonucleoside + phosphate = a purine nucleobase + alpha-D-ribose 1-phosphate. The catalysed reaction is a purine 2'-deoxy-D-ribonucleoside + phosphate = a purine nucleobase + 2-deoxy-alpha-D-ribose 1-phosphate. In terms of biological role, catalyzes the reversible phosphorolytic breakdown of the N-glycosidic bond in the beta-(deoxy)ribonucleoside molecules, with the formation of the corresponding free purine bases and pentose-1-phosphate. This chain is Purine nucleoside phosphorylase DeoD-type, found in Listeria monocytogenes serotype 4b (strain CLIP80459).